Here is a 103-residue protein sequence, read N- to C-terminus: uncharacterized protein (103 aa).

This is an uncharacterized protein from Dictyostelium discoideum (Social amoeba).